A 48-amino-acid chain; its full sequence is uncharacterized protein (48 aa).

A disordered region spans residues 1 to 48 (MSRRMGGGMPKINLSGAIPNNNTSTPSTPTLRSSVSVSSSNSRGLFLA). The span at 20–48 (NNNTSTPSTPTLRSSVSVSSSNSRGLFLA) shows a compositional bias: low complexity.

This is an uncharacterized protein from Dictyostelium discoideum (Social amoeba).